The chain runs to 475 residues: Sulfate adenylyltransferase subunit 1 (475 aa).

Residues 25–239 (KSLLRFLTCG…EVLETVEIQR (215 aa)) enclose the tr-type G domain. A G1 region spans residues 34–41 (GSVDDGKS). Residue 34 to 41 (GSVDDGKS) coordinates GTP. Positions 92–96 (GITID) are G2. Residues 113–116 (DTPG) form a G3 region. GTP is bound by residues 113–117 (DTPGH) and 168–171 (NKMD). The segment at 168 to 171 (NKMD) is G4. Residues 206 to 208 (SAL) are G5.

Belongs to the TRAFAC class translation factor GTPase superfamily. Classic translation factor GTPase family. CysN/NodQ subfamily. In terms of assembly, heterodimer composed of CysD, the smaller subunit, and CysN.

It carries out the reaction sulfate + ATP + H(+) = adenosine 5'-phosphosulfate + diphosphate. The protein operates within sulfur metabolism; hydrogen sulfide biosynthesis; sulfite from sulfate: step 1/3. Functionally, with CysD forms the ATP sulfurylase (ATPS) that catalyzes the adenylation of sulfate producing adenosine 5'-phosphosulfate (APS) and diphosphate, the first enzymatic step in sulfur assimilation pathway. APS synthesis involves the formation of a high-energy phosphoric-sulfuric acid anhydride bond driven by GTP hydrolysis by CysN coupled to ATP hydrolysis by CysD. This Escherichia coli (strain ATCC 8739 / DSM 1576 / NBRC 3972 / NCIMB 8545 / WDCM 00012 / Crooks) protein is Sulfate adenylyltransferase subunit 1.